The sequence spans 305 residues: MAQRLPWRFVAEWTSEGEMVLREVKRIYAAGATRYQEYMIAELAGIGKALVLDGKVQSSILDEHWYHEALVHPILLAHQCPRKVLVIGGGEGATVREVLRHSCVEHVTMVDIDEELVELAKKHLAEWHQGAFSSDKLELVIGDGRRYVENCHRKYDAIILDLVDPMEGGPAARLYTLEFYRAVKGCLRPGGAVVTQATSPTLSPRVYAVIRNTLAKVFTIVRPYVSYVRSYNGLWGFVAASDTVDPAKLSAKEVDELIAARIRGQLRFYDGETHEWMFRLPLPVRQVLSETRDYATDEKPVYVPV.

One can recognise a PABS domain in the interval 7-242; sequence WRFVAEWTSE…GLWGFVAASD (236 aa). Glutamine 36 contributes to the S-methyl-5'-thioadenosine binding site. Spermidine is bound by residues histidine 67 and glutamate 91. S-methyl-5'-thioadenosine is bound by residues aspartate 111 and 143 to 144; that span reads DG. Aspartate 161 (proton acceptor) is an active-site residue. Proline 170 provides a ligand contact to S-methyl-5'-thioadenosine.

Belongs to the spermidine/spermine synthase family. Homodimer or homotetramer.

It localises to the cytoplasm. It catalyses the reaction S-adenosyl 3-(methylsulfanyl)propylamine + propane-1,3-diamine = norspermidine + S-methyl-5'-thioadenosine + H(+). In terms of biological role, involved in the biosynthesis of polyamines which are thought to support the growth of thermophilic microorganisms under high-temperature conditions. It seems that long-chain and branched-chain of polyamines effectively stabilize DNA and RNA, respectively. Catalyzes the irreversible transfer of a propylamine group from the amino donor S-adenosylmethioninamine (decarboxy-AdoMet) to 1,3-diaminopropane to yield sym-norspermidine (bis(3-aminopropyl)amine). It can also synthesize thermospermine from spermidine with a very low activity. In Hyperthermus butylicus (strain DSM 5456 / JCM 9403 / PLM1-5), this protein is Polyamine aminopropyltransferase 2.